A 303-amino-acid polypeptide reads, in one-letter code: Glutathione transport system permease protein GsiD (303 aa).

A run of 6 helical transmembrane segments spans residues 40 to 60, 105 to 125, 144 to 164, 165 to 185, 222 to 242, and 266 to 286; these read AMTA…ARWI, LAAG…LGLL, LFAF…GSGI, ANVI…LVRG, IVVF…SLSF, and VIAP…VLAF. Residues 101-290 form the ABC transmembrane type-1 domain; that stretch reads AQISLAAGVF…LTVLAFNLLG (190 aa).

This sequence belongs to the binding-protein-dependent transport system permease family. In terms of assembly, the complex is composed of two ATP-binding proteins (GsiA), two transmembrane proteins (GsiC and GsiD) and a solute-binding protein (GsiB).

It is found in the cell inner membrane. Functionally, part of the ABC transporter complex GsiABCD involved in glutathione import. Probably responsible for the translocation of the substrate across the membrane. The protein is Glutathione transport system permease protein GsiD of Shigella dysenteriae serotype 1 (strain Sd197).